A 156-amino-acid chain; its full sequence is Large ribosomal subunit protein uL15 (156 aa).

Over residues methionine 1–threonine 13 the composition is skewed to basic and acidic residues. The tract at residues methionine 1–arginine 41 is disordered. The span at arginine 21–valine 35 shows a compositional bias: gly residues.

This sequence belongs to the universal ribosomal protein uL15 family. In terms of assembly, part of the 50S ribosomal subunit.

Its function is as follows. Binds to the 23S rRNA. The polypeptide is Large ribosomal subunit protein uL15 (Sinorhizobium medicae (strain WSM419) (Ensifer medicae)).